The primary structure comprises 462 residues: UDP-N-acetylmuramate--L-alanine ligase (462 aa).

119 to 125 serves as a coordination point for ATP; the sequence is GTHGKTT.

The protein belongs to the MurCDEF family.

The protein resides in the cytoplasm. It carries out the reaction UDP-N-acetyl-alpha-D-muramate + L-alanine + ATP = UDP-N-acetyl-alpha-D-muramoyl-L-alanine + ADP + phosphate + H(+). It participates in cell wall biogenesis; peptidoglycan biosynthesis. Functionally, cell wall formation. The sequence is that of UDP-N-acetylmuramate--L-alanine ligase from Parabacteroides distasonis (strain ATCC 8503 / DSM 20701 / CIP 104284 / JCM 5825 / NCTC 11152).